A 188-amino-acid polypeptide reads, in one-letter code: Adenylate kinase (188 aa).

Residue 12–17 participates in ATP binding; it reads GVGKGT. The tract at residues 32-61 is NMP; it reads STGDIFRSAMANHTELGDKAKSFMDAGNLV. Residues Thr-33, Arg-38, 59–61, 89–92, and Gln-96 contribute to the AMP site; these read NLV and GYPR. Residues 130–136 form an LID region; that stretch reads GRGREDD. Arg-131 lines the ATP pocket. AMP contacts are provided by Arg-133 and Arg-144. Gly-172 lines the ATP pocket.

It belongs to the adenylate kinase family. Monomer.

The protein localises to the cytoplasm. The enzyme catalyses AMP + ATP = 2 ADP. It participates in purine metabolism; AMP biosynthesis via salvage pathway; AMP from ADP: step 1/1. In terms of biological role, catalyzes the reversible transfer of the terminal phosphate group between ATP and AMP. Plays an important role in cellular energy homeostasis and in adenine nucleotide metabolism. The protein is Adenylate kinase of Oenococcus oeni (strain ATCC BAA-331 / PSU-1).